A 142-amino-acid polypeptide reads, in one-letter code: Large ribosomal subunit protein uL13 (142 aa).

It belongs to the universal ribosomal protein uL13 family. As to quaternary structure, part of the 50S ribosomal subunit.

This protein is one of the early assembly proteins of the 50S ribosomal subunit, although it is not seen to bind rRNA by itself. It is important during the early stages of 50S assembly. The protein is Large ribosomal subunit protein uL13 of Shewanella baltica (strain OS223).